The primary structure comprises 414 residues: 2,3-bisphosphoglycerate-independent phosphoglycerate mutase (414 aa).

It belongs to the BPG-independent phosphoglycerate mutase family. A-PGAM subfamily.

The catalysed reaction is (2R)-2-phosphoglycerate = (2R)-3-phosphoglycerate. Its pathway is carbohydrate degradation; glycolysis; pyruvate from D-glyceraldehyde 3-phosphate: step 3/5. Functionally, catalyzes the interconversion of 2-phosphoglycerate and 3-phosphoglycerate. The chain is 2,3-bisphosphoglycerate-independent phosphoglycerate mutase from Saccharolobus islandicus (strain L.S.2.15 / Lassen #1) (Sulfolobus islandicus).